The following is a 226-amino-acid chain: Putative DNA repair protein recA homolog 4 (226 aa).

41–48 (GPEASGKT) lines the ATP pocket.

This sequence belongs to the RecA family.

The protein resides in the cytoplasm. Functionally, involved in recombination ability and DNA strand transfer activity. In Arabidopsis thaliana (Mouse-ear cress), this protein is Putative DNA repair protein recA homolog 4.